Reading from the N-terminus, the 207-residue chain is Lipid A acyltransferase PagP (207 aa).

The first 24 residues, 1–24 (MKFDLTAACTLSATLLVSSGTVFA), serve as a signal peptide directing secretion. Catalysis depends on residues His79, Asp122, and Ser123.

The protein belongs to the lipid A palmitoyltransferase family. As to quaternary structure, homodimer.

It localises to the cell outer membrane. It catalyses the reaction a lipid A + a 1,2-diacyl-sn-glycero-3-phosphocholine = a hepta-acyl lipid A + a 2-acyl-sn-glycero-3-phosphocholine. It carries out the reaction a lipid IVA + a 1,2-diacyl-sn-glycero-3-phosphocholine = a lipid IVB + a 2-acyl-sn-glycero-3-phosphocholine. The catalysed reaction is a lipid IIA + a 1,2-diacyl-sn-glycero-3-phosphocholine = a lipid IIB + a 2-acyl-sn-glycero-3-phosphocholine. Transfers a fatty acid residue from the sn-1 position of a phospholipid to the N-linked hydroxyfatty acid chain on the proximal unit of lipid A or its precursors. The sequence is that of Lipid A acyltransferase PagP from Photorhabdus laumondii subsp. laumondii (strain DSM 15139 / CIP 105565 / TT01) (Photorhabdus luminescens subsp. laumondii).